We begin with the raw amino-acid sequence, 186 residues long: Ribosome-recycling factor (186 aa).

This sequence belongs to the RRF family.

The protein localises to the cytoplasm. Functionally, responsible for the release of ribosomes from messenger RNA at the termination of protein biosynthesis. May increase the efficiency of translation by recycling ribosomes from one round of translation to another. The chain is Ribosome-recycling factor from Beijerinckia indica subsp. indica (strain ATCC 9039 / DSM 1715 / NCIMB 8712).